A 423-amino-acid chain; its full sequence is Serine--tRNA ligase (423 aa).

230–232 lines the L-serine pocket; the sequence is TAE. 261–263 contacts ATP; the sequence is RQE. E284 lines the L-serine pocket. ATP is bound at residue 348-351; sequence EISS. S384 contributes to the L-serine binding site.

It belongs to the class-II aminoacyl-tRNA synthetase family. Type-1 seryl-tRNA synthetase subfamily. In terms of assembly, homodimer. The tRNA molecule binds across the dimer.

Its subcellular location is the cytoplasm. It carries out the reaction tRNA(Ser) + L-serine + ATP = L-seryl-tRNA(Ser) + AMP + diphosphate + H(+). It catalyses the reaction tRNA(Sec) + L-serine + ATP = L-seryl-tRNA(Sec) + AMP + diphosphate + H(+). The protein operates within aminoacyl-tRNA biosynthesis; selenocysteinyl-tRNA(Sec) biosynthesis; L-seryl-tRNA(Sec) from L-serine and tRNA(Sec): step 1/1. In terms of biological role, catalyzes the attachment of serine to tRNA(Ser). Is also able to aminoacylate tRNA(Sec) with serine, to form the misacylated tRNA L-seryl-tRNA(Sec), which will be further converted into selenocysteinyl-tRNA(Sec). The sequence is that of Serine--tRNA ligase from Thermoanaerobacter pseudethanolicus (strain ATCC 33223 / 39E) (Clostridium thermohydrosulfuricum).